A 264-amino-acid polypeptide reads, in one-letter code: Regulator of cytoskeleton and endocytosis RVS161 (264 aa).

The 225-residue stretch at 15–239 (ASVIVKDVDK…LDPASRDEYA (225 aa)) folds into the BAR domain.

Its subcellular location is the cytoplasm. The protein localises to the cytoskeleton. Component of a cytoskeletal structure that is required for the formation of endocytic vesicles at the plasma membrane level. Plays an important role in virulence. In Candida albicans (strain SC5314 / ATCC MYA-2876) (Yeast), this protein is Regulator of cytoskeleton and endocytosis RVS161 (RVS161).